A 2893-amino-acid polypeptide reads, in one-letter code: MAFSCGTLSYSAVAQAPSVAYAPRTWEVDEARRRRVIKRLALEQERIRNVLDVAVYDQATWEQEDARDNEFLTEQLNNLYTIYSIAERCTRRPIKEXSPISVSNRFAPLESLKVEVGQEAXECXFKKPKYTRXCKKVKRVATRFVREKVVRPMCSRSPMLLFKLKKIIYDLHLYRLRKQIRMLRRQKQRDYELECVTNLLQLSNPVQAKPEMDNPNPGPDGEGEVELEKDSNVVLTTQRDPSTSIPAPVSVKWSRWTSNDVVDDYATITSRWYQIAEFVWSKDDPFDKELARLILPRALLSSIEANSDAICDVPNTIPFKVHAYWRGDMEVRVQINSNKFQVGQLQATWYYSDHENLNISSKRSVYGFSQMDHALISASASNEAKLVIPYKHVYPFLPTRIVPDWTTGILDMGALNIRVIAPLRMSATGPTTCNVVVFIKLNNSEFTGTSSGKFYASQIRAKPEMDRILNLAEGLLNNTIGGNNMDNPSYQQSPRHFVPTGMHSLALGTNLVEPLHALRLDAAGTTQHPVGCAPDEDMTVSSIASRYGLIRRVQWKKDHAKGSLLLQLDADPFVEQRIEGTNPISLYWFAPVGVVSSMFMQWRGSLEYRFDIIASQFHTGRLIVGYVPGLTASLQLQMDYMKLKSSSYVVFDLQESNSFTFEVPYVSYRPWWVRKYGGNYLPSSTDAPSTLFMYVQVPLIPMEAVSDTIDINVYVRGGSSFEVCVPVQPSLGLNWNTDFILRNDEEYRAKTGYAPYYAGVWHSFNNSNSLVFRWGSXSDQIAQWPTISVPRGELAFLRIKDGKQAAVGTQPWRTMVVWPSGHGYNIGIPTYNAERARQLAQHLYGGGSLTDEKAKQLFVPANQQGPGKVSNGNPVWEVMRAPLATQRAHIQDFEFIEAIPEGEESRNTTVLDTTTTLQSSGFGRAFFGEAFNDLKTLMRRYQLYGQLLLSVTTDKDIDHCMFTFPCLPQGLALDIGSAGSPHEIFNRCRDGIIPLIASGYRFYRGDLRYKIVFPSNVNSNIWVQHRPDRRLEGWSAAKIVNCDAVSTGQGVYNHGYASHIQITRVNNVIELEVPFYNATCYNYLQAFNASSAASSYAVSLGEISVGFQATSDDIASIVNKPVTIYYSIGDGMQFSQWVGYQPMMILDQLPAPVVRAVPEGPIAKIKNFFHQTADEVREAQAAKMREDMGMVVQDVIGELSQAIPDLQQPEVQANVFSLVSQLVHAIIGTSLKTVAWAIVSIFVTLGLIGREMMHSVITVVKRLLEKYHLATQPQESASSSTVISAVPEAPNAEAEEASAWVSIIYNGVCNMLNVAAQKPKQFKDWVKLATVDFSNNCRGSNQVFVFFKNTFEVLKKMWGYVFCQSNPAARLLKAVNDEPEILKAWVKECLYLDDPKFRMRRAHDQEYIERVFAAHSYGQILLHDLTAEMNQSRNLSVFTRVYDQISKLKTDLMEMGSNPYIRRECFTICMCGASGIGKSYLTDSLCSELLRASRTPVTTGIKCVVNPLSDYWDQCDFQPVLCVDDMWSVETSTTLDKQLNMLFQVHSPIVLSPPKADLEGKKMRYNPEIFIYNTNKPFPRFDRIAMEAIYRRRNVLIECKASEEKKRGCKHCENDIPIAECSPKMLKDFHHIKFRYAHDVCNSETTWSEWMTYNEFLEWITPVYMANRRKANESFKMRVDEMQMLRMDEPLEGDNILNKYVEVNQRLVEEMKAFKERTLWSDLHRVGAEISASVKKALPTISITEKLPHWTVQCGIAKPEMDHAYEVMSSYAAGMNAEIEAHEQVRRSSVECQFAEPQAXRNPDDEGPTIDEELMGDTEFTSQALERLVDEGYITGKQKKYIAMWCSKRREHTADFDLVWTDNLRVLSAYVHERSSSTRLSTDDVKLYKTISMLHQKYDTTECAKCQHWYAPLTDIYVDDKKLFWCQKEKKTLIDVRKLSKEDVTVQSKLXNLSVPCGEVCMLHSKYFNYLFHKAWLFENPTWRLIYNGTKKGMPEYFMNCVDEISLDSKFGKVKVWLQAIIDKYLTRPVKMIRDFLFKWWPQVAYVLSLLGIIGITAYEMRNPKPTSEELADHYVNRHCSSDFWSPGLASPQGLKYSEAVTVKAPRIHRLPVTTKPQGSTQQVDAAVNKILQNMVYIGVVFPKVPGSKWRDINFRCLMLHNRQCLMLRHYIESTAAFPEGTKYYFKYIHNQETRMSGDISGIEIDLLNLPRLYYGGLAGEESFDSNIVLVTMPNRIPECKSIIKFIASHNEHIRAQNDGVLVTGDHTQLLAFENNNKTPISINADGLYEVILQGVYTYPYHGDGVCGSILLSRNLQRPIIGIHVAGTEGLHGFGVAEPLVHEMFTGKAIESEREPYDRVYELPLRELDESDIGLDTDLYPIGRVDAKLAHAQSPSTGIKKTLIHGTFDVRTEPNPMSSRDPRIAPHDPLKLGCEKHGMPCSPFNRKHLELATNHLKEKLVSVVKPINGCKIRSLQDAXCGVPGLDGFDSISWNTSAGFPLSSLKPPGTSGKRWLFDIELQDSGCYLLRGMRPELEIQLSTTQLMRKKGIKPHTIFTDCLKDTCLPVEKCRIPGKTRIFSISPVQFTIPFRQYYLDFMASYRAARLNAEHGIGIDVNSLEWTNLATRLSKXGTHIVTGDYKNFGPGLDSDVAASAFEIIIDWVLHYTEEDNKDEMKRVMWTMAQEILAPSHLYRDLVYRVPCGIPSGSPITDILNTISNCLLIRLAWLGITDLPLSEFSQNVVLVCYGDDLIMNVSDNMIDKFNAVTIGKFFSQYKMEFTDQDKSGNTVKWRTLQTATFLKHGFLKHPTRPVFLANLDKVSVEGTTNWTHARGLGRRTATIENAKQALELAFGWGPEYFNYVRNTIKMAFDKLGIYEDLITWEEMDVRCYASA.

The interval 206-226 (VQAKPEMDNPNPGPDGEGEVE) is disordered. The SF3 helicase domain maps to 1446 to 1612 (SKLKTDLMEM…EEKKRGCKHC (167 aa)). 1472 to 1479 (GASGIGKS) lines the ATP pocket. A Peptidase C3 domain is found at 2119–2345 (GSTQQVDAAV…VAEPLVHEMF (227 aa)). Residues histidine 2170, asparagine 2227, and cysteine 2307 each act as for 3C-like protease activity in the active site. The RdRp catalytic domain maps to 2633–2763 (THIVTGDYKN…NVSDNMIDKF (131 aa)).

Specific enzymatic cleavages in vivo by the viral 3C-like protease yield three mature proteins. 3C-like protease is cleaved autocatalytically.

It is found in the virion. The enzyme catalyses RNA(n) + a ribonucleoside 5'-triphosphate = RNA(n+1) + diphosphate. The catalysed reaction is ATP + H2O = ADP + phosphate + H(+). With respect to regulation, inhibited by Rupintrivir. Functionally, capsid protein that assembles with the capsid proteins VP1 and VP3 to form a pseudo-T3 icosahedral capsid of about 40 nm. Its function is as follows. Capsid protein that assembles with the capsid proteins VP1 and VP2 to form a pseudo T3 icosahedral capsid of about 40 nm. Capsid protein that assembles with the capsid proteins VP2 and VP3 to form a pseudo T3 icosahedral capsid of about 40 nm. In terms of biological role, displays RNA helix destabilizing and strand annealing acceleration activity. This activity is necessary at several points during genome replication, for example to separate duplexes that form after genome replication. Functionally, cysteine protease that generates mature viral proteins from the precursor polyprotein. Its function is as follows. Replicates genomic and antigenomic RNA. This is Genome polyprotein from Deformed wing virus (DWV).